A 127-amino-acid polypeptide reads, in one-letter code: UPF0389 protein GA21628 (127 aa).

Residues 69 to 88 (IRLANIMIALTVIGCGIMVY) form a helical membrane-spanning segment.

The protein belongs to the UPF0389 family.

It localises to the membrane. The chain is UPF0389 protein GA21628 from Drosophila pseudoobscura pseudoobscura (Fruit fly).